The chain runs to 431 residues: Glutamate-1-semialdehyde 2,1-aminomutase (431 aa).

At Lys269 the chain carries N6-(pyridoxal phosphate)lysine.

Belongs to the class-III pyridoxal-phosphate-dependent aminotransferase family. HemL subfamily. As to quaternary structure, homodimer. Pyridoxal 5'-phosphate is required as a cofactor.

The protein localises to the cytoplasm. The catalysed reaction is (S)-4-amino-5-oxopentanoate = 5-aminolevulinate. Its pathway is porphyrin-containing compound metabolism; protoporphyrin-IX biosynthesis; 5-aminolevulinate from L-glutamyl-tRNA(Glu): step 2/2. It participates in porphyrin-containing compound metabolism; chlorophyll biosynthesis. This is Glutamate-1-semialdehyde 2,1-aminomutase from Chlorobium chlorochromatii (strain CaD3).